A 560-amino-acid polypeptide reads, in one-letter code: MKVWMAILISILCWQSSVWAVCPAWSPARAQEEISRLQQQIKQWDDDYWKEGKSEVEDGVYDQLSARLTQWQRCFVSEPRDVMMPPLNGAVMHPVAHTGVRKMADKNALSLWMRERSDLWVQPKVDGVAVTLVYRDGKLNKAISRGNGLKGEDWTQKVSLISAVLQTVSGPLANSTLQGEIFLQREGHIQQQMGGINARAKVAGLMMRQGNSDTLNSLAVFVWAWPDGPQLMTDRLKELATAGFTLTQRYTRAVKNADEVARVRNEWWKAKLPFVTDGVVVRGAKEPESRHWLPGQAEWLVAWKYQPVAQVAEVKAIQFAVGKSGKISVVASLAPVMLDDKKVQRVNIGSVRRWQEWDIAPGDQILVSLAGQGIPRIDDVVWRGAERTKPTPPENRFNPLTCYFASDVCQEQFISRLVWLGSKQVLGLDGIGEAGWRALHQTHRFEHIFSWLLLTPEQLQNTPGIAKSKSAQLWHQFNLARNQPFTRWVMAMGIPLTRAALNASDERSWSQLLFSTEQFWQQLPGTGSGRARQVIEWKENAQIKKLGSWLAAQQITGFEP.

Lys124 serves as the catalytic N6-AMP-lysine intermediate.

This sequence belongs to the NAD-dependent DNA ligase family. LigB subfamily.

The enzyme catalyses NAD(+) + (deoxyribonucleotide)n-3'-hydroxyl + 5'-phospho-(deoxyribonucleotide)m = (deoxyribonucleotide)n+m + AMP + beta-nicotinamide D-nucleotide.. Functionally, catalyzes the formation of phosphodiester linkages between 5'-phosphoryl and 3'-hydroxyl groups in double-stranded DNA using NAD as a coenzyme and as the energy source for the reaction. In Shigella flexneri, this protein is DNA ligase B.